A 128-amino-acid chain; its full sequence is Conopressin-conophysin (128 aa).

The first 27 residues, Met1 to Ala27, serve as a signal peptide directing secretion. Cys28 and Cys33 are joined by a disulfide. Gly36 bears the Glycine amide mark. A propeptide spanning residues Gly37–Arg44 is cleaved from the precursor. Disulfide bonds link Cys50–Cys90, Cys53–Cys64, Cys58–Cys80, Cys65–Cys70, Cys97–Cys115, Cys109–Cys127, and Cys116–Cys121.

This sequence belongs to the vasopressin/oxytocin family. In terms of tissue distribution, expressed by the venom gland.

It localises to the secreted. Targets vasopressin-oxytocin related receptors. Is more active on fish receptors than on their human counterparts, supporting an evolved role of this conopressin in the envenomation process. Acts as an agonist on zebrafish vasopressin receptors V1a1R (EC(50)=10.6 nM), V1a2R (EC(50)=44.06 nM, partial agonist), V2R (EC(50)=299.2 nM) and oxytocin receptor (EC(50)=353.73 nM, partial agonist). Shows a weaker activity on human receptors AVPR1B (EC(50)=51.92 nM), AVPR1A (EC(50)=123.78 nM), AVPR2 (EC(50)=299.2 nM) and oxytocin (OXTR) receptor (EC(50)=455.66 nM, partial agonist). In vivo, exhibits grooming and scratching behavior in mice, following intracerebral injection. In Conus geographus (Geography cone), this protein is Conopressin-conophysin.